The chain runs to 608 residues: Chaperone protein DnaK (608 aa).

Position 175 is a phosphothreonine; by autocatalysis (Thr-175).

The protein belongs to the heat shock protein 70 family.

Its function is as follows. Acts as a chaperone. This is Chaperone protein DnaK from Finegoldia magna (strain ATCC 29328 / DSM 20472 / WAL 2508) (Peptostreptococcus magnus).